A 206-amino-acid polypeptide reads, in one-letter code: Large ribosomal subunit protein eL13z (206 aa).

Positions 183–206 (ERTNKRHAGARAKRAADAEKEEKK) are disordered. Residues 186–195 (NKRHAGARAK) are compositionally biased toward basic residues. Residues 196–206 (RAADAEKEEKK) are compositionally biased toward basic and acidic residues.

Belongs to the eukaryotic ribosomal protein eL13 family.

The protein is Large ribosomal subunit protein eL13z of Brassica napus (Rape).